The primary structure comprises 208 residues: N-(5'-phosphoribosyl)anthranilate isomerase (208 aa).

This sequence belongs to the TrpF family.

The enzyme catalyses N-(5-phospho-beta-D-ribosyl)anthranilate = 1-(2-carboxyphenylamino)-1-deoxy-D-ribulose 5-phosphate. It functions in the pathway amino-acid biosynthesis; L-tryptophan biosynthesis; L-tryptophan from chorismate: step 3/5. This chain is N-(5'-phosphoribosyl)anthranilate isomerase, found in Neisseria meningitidis serogroup C / serotype 2a (strain ATCC 700532 / DSM 15464 / FAM18).